Here is a 358-residue protein sequence, read N- to C-terminus: Heavy metal-associated isoprenylated plant protein 37 (358 aa).

An HMA domain is found at 12 to 75; it reads IQTFSLRVNI…KLVKAGKHAE (64 aa). A metal cation contacts are provided by C23 and C26. Disordered regions lie at residues 100-194 and 332-358; these read QKGQ…QNTQ and QQQS…CNIM. The span at 128–141 shows a compositional bias: acidic residues; that stretch reads AEEDGDGSEEEDGD. A compositionally biased stretch (low complexity) spans 148 to 181; it reads ANQQQQQNVVNAKKNSGGAAMNNGNNGVNAASKK. 2 stretches are compositionally biased toward polar residues: residues 184 to 194 and 339 to 358; these read QKQSNHNQNTQ and HATN…CNIM. At C355 the chain carries Cysteine methyl ester. A lipid anchor (S-farnesyl cysteine) is attached at C355. The propeptide at 356-358 is removed in mature form; sequence NIM.

The protein belongs to the HIPP family.

Functionally, heavy-metal-binding protein. This is Heavy metal-associated isoprenylated plant protein 37 from Arabidopsis thaliana (Mouse-ear cress).